A 63-amino-acid polypeptide reads, in one-letter code: Small ribosomal subunit protein bS21 (63 aa).

The protein belongs to the bacterial ribosomal protein bS21 family.

This is Small ribosomal subunit protein bS21 from Syntrophus aciditrophicus (strain SB).